Consider the following 247-residue polypeptide: MSHRDTLFSAPIARLGDWTFDERVAEVFPDMIQRSVPGYSNIISMISMLAERFVQPGTQVYDLGCSLGAATLSVRRNIHHDNCKIIAIDNSPAMIERCRRHIDAYKAPTPVDVIEGDIRDIAIENASMVVLNFTLQFLEPSERQALLDKIYQGLNPGGALVLSEKFSFEDAKVGELLFNMHHDFKRANGYSELEISQKRSMLENVMLTDSVETHKARLHKAGFEHSELWFQCFNFGSLVALKAEDAA.

Residues Tyr39, 64–66 (GCS), 89–90 (DN), 117–118 (DI), Asn132, and Arg199 contribute to the S-adenosyl-L-methionine site.

This sequence belongs to the class I-like SAM-binding methyltransferase superfamily. Cx-SAM synthase family. In terms of assembly, homodimer.

The enzyme catalyses prephenate + S-adenosyl-L-methionine = carboxy-S-adenosyl-L-methionine + 3-phenylpyruvate + H2O. Its function is as follows. Catalyzes the conversion of S-adenosyl-L-methionine (SAM) to carboxy-S-adenosyl-L-methionine (Cx-SAM). The polypeptide is Carboxy-S-adenosyl-L-methionine synthase (Shigella boydii serotype 4 (strain Sb227)).